We begin with the raw amino-acid sequence, 313 residues long: NADH-ubiquinone oxidoreductase chain 1 (313 aa).

A run of 8 helical transmembrane segments spans residues Leu7–Leu27, Ile73–Met93, Leu104–Gly124, Leu150–Phe170, Tyr175–Ala195, Leu226–Phe246, Asp250–Val270, and Met293–Phe313.

Belongs to the complex I subunit 1 family.

The protein localises to the mitochondrion inner membrane. It catalyses the reaction a ubiquinone + NADH + 5 H(+)(in) = a ubiquinol + NAD(+) + 4 H(+)(out). Its function is as follows. Core subunit of the mitochondrial membrane respiratory chain NADH dehydrogenase (Complex I) that is believed to belong to the minimal assembly required for catalysis. Complex I functions in the transfer of electrons from NADH to the respiratory chain. The immediate electron acceptor for the enzyme is believed to be ubiquinone. The polypeptide is NADH-ubiquinone oxidoreductase chain 1 (Aedes aegypti (Yellowfever mosquito)).